Consider the following 297-residue polypeptide: Release factor glutamine methyltransferase (297 aa).

Residues 134 to 138, aspartate 157, and asparagine 200 contribute to the S-adenosyl-L-methionine site; that span reads GTGSG. 200–203 contacts substrate; the sequence is NPPY.

The protein belongs to the protein N5-glutamine methyltransferase family. PrmC subfamily.

It catalyses the reaction L-glutaminyl-[peptide chain release factor] + S-adenosyl-L-methionine = N(5)-methyl-L-glutaminyl-[peptide chain release factor] + S-adenosyl-L-homocysteine + H(+). In terms of biological role, methylates the class 1 translation termination release factors RF1/PrfA and RF2/PrfB on the glutamine residue of the universally conserved GGQ motif. The sequence is that of Release factor glutamine methyltransferase from Bradyrhizobium diazoefficiens (strain JCM 10833 / BCRC 13528 / IAM 13628 / NBRC 14792 / USDA 110).